Consider the following 403-residue polypeptide: High affinity transport system protein p37 (403 aa).

A signal peptide spans 1–23 (MLKKLKNFILFSSIFSPIAFAIS). C24 carries the N-palmitoyl cysteine lipid modification. C24 carries the S-diacylglycerol cysteine lipid modification.

The protein resides in the cell membrane. P37 is part of a high-affinity transport system. The protein is High affinity transport system protein p37 (p37) of Mesomycoplasma hyorhinis (Mycoplasma hyorhinis).